The sequence spans 484 residues: tRNA sulfurtransferase (484 aa).

In terms of domain architecture, THUMP spans 63–167 (KEMGERLTCM…DKRLFVIHSQ (105 aa)). Residues 185-186 (LM), K267, G289, and Q298 each bind ATP. Cysteines 346 and 457 form a disulfide. One can recognise a Rhodanese domain in the interval 405-483 (ALAGQIVIDI…GHANVRVYRP (79 aa)). The active-site Cysteine persulfide intermediate is C457.

The protein belongs to the ThiI family.

The protein localises to the cytoplasm. It carries out the reaction [ThiI sulfur-carrier protein]-S-sulfanyl-L-cysteine + a uridine in tRNA + 2 reduced [2Fe-2S]-[ferredoxin] + ATP + H(+) = [ThiI sulfur-carrier protein]-L-cysteine + a 4-thiouridine in tRNA + 2 oxidized [2Fe-2S]-[ferredoxin] + AMP + diphosphate. The catalysed reaction is [ThiS sulfur-carrier protein]-C-terminal Gly-Gly-AMP + S-sulfanyl-L-cysteinyl-[cysteine desulfurase] + AH2 = [ThiS sulfur-carrier protein]-C-terminal-Gly-aminoethanethioate + L-cysteinyl-[cysteine desulfurase] + A + AMP + 2 H(+). It participates in cofactor biosynthesis; thiamine diphosphate biosynthesis. Catalyzes the ATP-dependent transfer of a sulfur to tRNA to produce 4-thiouridine in position 8 of tRNAs, which functions as a near-UV photosensor. Also catalyzes the transfer of sulfur to the sulfur carrier protein ThiS, forming ThiS-thiocarboxylate. This is a step in the synthesis of thiazole, in the thiamine biosynthesis pathway. The sulfur is donated as persulfide by IscS. This chain is tRNA sulfurtransferase, found in Pseudomonas fluorescens (strain Pf0-1).